The primary structure comprises 56 residues: Large ribosomal subunit protein bL32 (56 aa).

Belongs to the bacterial ribosomal protein bL32 family.

The sequence is that of Large ribosomal subunit protein bL32 from Prochlorococcus marinus (strain MIT 9215).